Consider the following 1610-residue polypeptide: Adenylate cyclase type 10 (1610 aa).

Guanylate cyclase domains are found at residues 42–179 (VLMF…RLAQ) and 293–418 (TIVF…ARMM). Mg(2+) contacts are provided by aspartate 47 and isoleucine 48. 47-52 (DISGFT) contacts ATP. Hydrogencarbonate is bound at residue lysine 95. Aspartate 99 serves as a coordination point for Mg(2+). The ATP site is built by aspartate 99 and lysine 144. Residues valine 167, arginine 176, and methionine 337 each contribute to the hydrogencarbonate site. ATP-binding positions include valine 406 and 412–416 (NLAAR).

It belongs to the adenylyl cyclase class-4/guanylyl cyclase family. Mg(2+) is required as a cofactor. It depends on Mn(2+) as a cofactor. Post-translationally, cleavage may occur to generate the active 48 kDa form. Detected in airway epithelial cells and testis (at protein level). Weakly expressed in multiple tissues. Expressed in brain, heart, kidney, liver, lung, pancreas, peripheral blood leukocytes, placenta, skeletal muscle, stomach, thymus, airway epithelial cells, duodenum, jejunum and ileum. Very low level of expression in bone.

It is found in the cell membrane. The protein localises to the cytoplasm. The protein resides in the cytoskeleton. It localises to the perinuclear region. Its subcellular location is the nucleus. It is found in the cell projection. The protein localises to the cilium. The protein resides in the mitochondrion. The catalysed reaction is ATP = 3',5'-cyclic AMP + diphosphate. Activated by manganese or magnesium ions. In the presence of magnesium ions, the enzyme is activated by bicarbonate. In the presence of manganese ions, the enzyme is inhibited by bicarbonate. In the absence of magnesium and bicarbonate, the enzyme is weakly activated by calcium. Calcium mildly increases the enzyme activity, also in the presence of magnesium ions. Functionally, catalyzes the formation of the signaling molecule cAMP. May function as sensor that mediates responses to changes in cellular bicarbonate and CO(2) levels. Has a critical role in mammalian spermatogenesis by producing the cAMP which regulates cAMP-responsive nuclear factors indispensable for sperm maturation in the epididymis. Induces capacitation, the maturational process that sperm undergo prior to fertilization. Involved in ciliary beat regulation. The protein is Adenylate cyclase type 10 (ADCY10) of Homo sapiens (Human).